The sequence spans 1123 residues: Phytochrome A (1123 aa).

Residues Met-1–Ser-14 are compositionally biased toward low complexity. The interval Met-1–Ala-20 is disordered. One can recognise a GAF domain in the interval Ser-218–Leu-401. Cys-323 lines the phytochromobilin pocket. One can recognise a PAS 1 domain in the interval Val-617 to Gln-687. A PAC domain is found at Arg-690–Arg-746. One can recognise a PAS 2 domain in the interval Ile-747 to Gly-821. A Histidine kinase domain is found at Tyr-901–Val-1118.

It belongs to the phytochrome family. Homodimer. Contains one covalently linked phytochromobilin chromophore.

In terms of biological role, regulatory photoreceptor which exists in two forms that are reversibly interconvertible by light: the Pr form that absorbs maximally in the red region of the spectrum and the Pfr form that absorbs maximally in the far-red region. Photoconversion of Pr to Pfr induces an array of morphogenic responses, whereas reconversion of Pfr to Pr cancels the induction of those responses. Pfr controls the expression of a number of nuclear genes including those encoding the small subunit of ribulose-bisphosphate carboxylase, chlorophyll A/B binding protein, protochlorophyllide reductase, rRNA, etc. It also controls the expression of its own gene(s) in a negative feedback fashion. The protein is Phytochrome A (PHYA) of Solanum tuberosum (Potato).